A 144-amino-acid chain; its full sequence is UPF0306 protein Spro_0510 (144 aa).

It belongs to the UPF0306 family.

The protein is UPF0306 protein Spro_0510 of Serratia proteamaculans (strain 568).